A 598-amino-acid polypeptide reads, in one-letter code: Fumarate reductase flavoprotein subunit (598 aa).

FAD-binding positions include 12-16, 36-38, 44-52, 156-158, and Asp-212; these read GAGGA, ISK, SHTVAAEGG, and HFV. At His-45 the chain carries Tele-8alpha-FAD histidine. Active-site residues include His-233 and Arg-249. Residues 356–357, Glu-380, and 391–397 contribute to the FAD site; these read HY and RLGSNSL. The interval 577 to 598 is disordered; the sequence is AKRVYGGEATAQDKQNKEKANG.

Belongs to the FAD-dependent oxidoreductase 2 family. FRD/SDH subfamily. In terms of assembly, part of an enzyme complex containing four subunits: a flavoprotein (FrdA), an iron-sulfur protein (FrdB), and two hydrophobic anchor proteins (FrdC and FrdD). It depends on FAD as a cofactor.

The protein localises to the cell inner membrane. It carries out the reaction a quinone + succinate = fumarate + a quinol. The catalysed reaction is a menaquinone + succinate = a menaquinol + fumarate. Its function is as follows. Two distinct, membrane-bound, FAD-containing enzymes are responsible for the catalysis of fumarate and succinate interconversion; the fumarate reductase is used in anaerobic growth, and the succinate dehydrogenase is used in aerobic growth. The protein is Fumarate reductase flavoprotein subunit (frdA) of Proteus vulgaris.